Here is a 73-residue protein sequence, read N- to C-terminus: Putative antimicrobial peptide clone 4 (73 aa).

The N-terminal stretch at 1-22 is a signal peptide; the sequence is MQMKYLIPIFFLVLIVADHCHA. The propeptide occupies 45–73; sequence DITSQIEQYRNLQKREAELEDILANLPVY.

Belongs to the non-disulfide-bridged peptide (NDBP) superfamily. Short antimicrobial peptide (group 4) family. Expressed by the venom gland.

Its subcellular location is the secreted. Antimicrobial peptide. Has a high antibacterial activity against the Gram-positive bacterium S.aureus (MIC=5-17.30 uM), the methicillin-resistant S.aureus (MRSA) (MIC=17.30 uM), and E.faecalis (MIC=69.23 uM). Has antifungal activity against Candida spp. and one Cryptococcus neoformans strains with MICs values ranging from 6.25 to 100 uM. Also shows an inhibitory activity on C.albicans biofilms at high concentrations. Has a moderate hemolytic potency (18% at 20 uM). Also inhibits the growth of the five cancer cell lines tested. In the model of polymicrobial sepsis, it exhibits an antibiotic effect, reducing the levels of microorganisms in the infectious focus and the inflammatory responses in the lung and cecum of septic animals. This is Putative antimicrobial peptide clone 4 from Tityus costatus (Brazilian scorpion).